The following is a 127-amino-acid chain: Large ribosomal subunit protein bL17 (127 aa).

Belongs to the bacterial ribosomal protein bL17 family. As to quaternary structure, part of the 50S ribosomal subunit. Contacts protein L32.

The protein is Large ribosomal subunit protein bL17 of Legionella pneumophila (strain Lens).